We begin with the raw amino-acid sequence, 521 residues long: Putative FNIP repeat-containing protein L162 (521 aa).

FNIP repeat units follow at residues 179–221 and 222–263; these read FNKS…LGYK and YNYP…MGGR.

This Acanthamoeba polyphaga mimivirus (APMV) protein is Putative FNIP repeat-containing protein L162.